A 275-amino-acid polypeptide reads, in one-letter code: 3-methyl-2-oxobutanoate hydroxymethyltransferase (275 aa).

Mg(2+) is bound by residues D44 and D83. 3-methyl-2-oxobutanoate is bound by residues 44–45 (DS), D83, and K113. Mg(2+) is bound at residue E115. E182 functions as the Proton acceptor in the catalytic mechanism.

The protein belongs to the PanB family. In terms of assembly, homodecamer; pentamer of dimers. It depends on Mg(2+) as a cofactor.

The protein localises to the cytoplasm. The catalysed reaction is 3-methyl-2-oxobutanoate + (6R)-5,10-methylene-5,6,7,8-tetrahydrofolate + H2O = 2-dehydropantoate + (6S)-5,6,7,8-tetrahydrofolate. It participates in cofactor biosynthesis; (R)-pantothenate biosynthesis; (R)-pantoate from 3-methyl-2-oxobutanoate: step 1/2. Its function is as follows. Catalyzes the reversible reaction in which hydroxymethyl group from 5,10-methylenetetrahydrofolate is transferred onto alpha-ketoisovalerate to form ketopantoate. This chain is 3-methyl-2-oxobutanoate hydroxymethyltransferase, found in Enterococcus faecalis (strain ATCC 700802 / V583).